The following is a 431-amino-acid chain: MKGRAVYIKTFGCQMNEHDSERMLGILGTKGFIEVDEPKKADIVIFNTCAIRHKAEQKFFSSLGRVKHLKKKNPQLKIIVAGCSAQLQGEKLLNKLPYIDYIIGPDNLHVIENIIENQVSHRIFTDENPEVANINLPVKRKDCVKAWVNIIYGCNNYCTYCVVPYTRGKERSRPVDDIIKEISLLAEQGYKEVTLLGQNVNSYKDGNTNFPLLLEKVEKIEGIKRIRFITSHPKDLSKELVDVMKDYKKICEHIHLPLQAGSNKILKLMNRKYTYEEYFEKICWLREAIPDIAITSDIIVGFPQEQHEDFEKTINALKEIRFDGIFAFKFSPRLGTAAAKLDGHISEEVKAARLIEVLKLQDEITERKNKRLEGKIQEVLVEGKDEEGFTTGKTRTNKVVKIYSDIKAGEIVNVKIAKTHRHSLEGDIIST.

Positions 4–120 (RAVYIKTFGC…IENIIENQVS (117 aa)) constitute an MTTase N-terminal domain. [4Fe-4S] cluster-binding residues include Cys-13, Cys-49, Cys-83, Cys-154, Cys-158, and Cys-161. Positions 140-367 (RKDCVKAWVN…LKLQDEITER (228 aa)) constitute a Radical SAM core domain. The 61-residue stretch at 370 to 430 (KRLEGKIQEV…RHSLEGDIIS (61 aa)) folds into the TRAM domain.

Belongs to the methylthiotransferase family. MiaB subfamily. In terms of assembly, monomer. Requires [4Fe-4S] cluster as cofactor.

The protein resides in the cytoplasm. The catalysed reaction is N(6)-dimethylallyladenosine(37) in tRNA + (sulfur carrier)-SH + AH2 + 2 S-adenosyl-L-methionine = 2-methylsulfanyl-N(6)-dimethylallyladenosine(37) in tRNA + (sulfur carrier)-H + 5'-deoxyadenosine + L-methionine + A + S-adenosyl-L-homocysteine + 2 H(+). In terms of biological role, catalyzes the methylthiolation of N6-(dimethylallyl)adenosine (i(6)A), leading to the formation of 2-methylthio-N6-(dimethylallyl)adenosine (ms(2)i(6)A) at position 37 in tRNAs that read codons beginning with uridine. This is tRNA-2-methylthio-N(6)-dimethylallyladenosine synthase from Thermodesulfovibrio yellowstonii (strain ATCC 51303 / DSM 11347 / YP87).